The sequence spans 489 residues: Probable capsid protein (489 aa).

The segment covering 87-101 has biased composition (basic and acidic residues); sequence RMERGESSETKREQQ. Residues 87-111 form a disordered region; that stretch reads RMERGESSETKREQQDLGATRKRKI. The Nuclear localization signal motif lies at 107 to 110; it reads RKRK. The CCHC-type zinc-finger motif lies at 409–426; the sequence is CRCWICTEEGHYANECPN. Residues 466-489 are disordered; that stretch reads ETTSEEESTTDSDSSSSDDEQLSF.

It belongs to the caulimoviridae capsid protein family. In terms of assembly, interacts (via nuclear localization signal) with host importin alpha.

Its subcellular location is the virion. The protein resides in the host nucleus. In terms of biological role, self assembles to form an icosahedral capsid, about 50 nm in diameter, nm, composed of 420 subunits of the viral capsid protein. The capsid encapsulates the genomic dsDNA. Following virus entry into host cell, provides nuclear import of the viral genome. Virus particles do not enter the nucleus, but dock at the nuclear membrane through the interaction with host importins. This chain is Probable capsid protein, found in Scrophularia californica (California bee plant).